We begin with the raw amino-acid sequence, 841 residues long: MFFSLKNSVAKLIAFWAICLVLPVWAGHYTFDPILLANNNINANANTDLSLFEQGGQLPGTYQVDIFLGDEKMDSTNVTFHAVKSPTGEYSLQSCLTKEQLSRYGVDVDNYPELLPPEKNIQQDKQASQCVNLAAIPQASEEFEFYAMRLVLNIPQVALRPKDEIPVERWDDGITAFLLNYMANSSTTTYRQTGEQQSSHYVQLYPGFNIGAWRIRNATSWNQSGNSAGKWQSSYIYATRGLYRLKSRVTLGQSYTPGDFFDSVPFSGVMLGDDDNMLPSSQRDFIPVVRGIARSQARVEVRQNGYLLYSTVVSPGPFELTDILPSHSNGDLHVTVLESNGTTQQFTVPYSVPAIRLRKGRLRYNLMAGRYRPANVDVETTPIAQATVAYGLPWNLTAFVGGQWSPHYQATTAGMGVMLGDYGALSSSITQATSEYRQQQPVKGQVWEVRYNKTLQASDTSFSVVNSQYSTADFSNLSDVLQSYRRHDYSRRDWHSNSLRNQTHVVVGQPLGQFGYLNLNWSRQNYRDAPASSSWGVQYSFNIGNLYCSLDWTQNQYRGNQDRLLSLSVSMPLGRERDTYAAYRMTSSDNSKDHEMSLYGHAFDNRLSWNVRQTERYAQFHSGENSGSLGLDWQGSYGDIGGNYYYTPTIRQFSANVSGGAVIHRHGLTLGPQINGTAALVEVPGVSGVSTSEDHRLKTDFRGYSIVPNIFPYEEHDILLETTDLPPDAEVTKTDAKVLPTEGAIVRASFSPQIGARALMTITRNNGETIPFGAMASLVNQPANAAIVDEGGKAYLTGLPETGQLLVQWGRGASQQCRVDYQLANAKKGDAGLYMLSGVCH.

An N-terminal signal peptide occupies residues methionine 1 to alanine 26. Cysteine 817 and cysteine 840 are joined by a disulfide.

The protein belongs to the fimbrial export usher family.

It is found in the cell outer membrane. In terms of biological role, involved in the export and assembly of the MyfA fimbrial subunit. This Yersinia enterocolitica protein is Outer membrane usher protein MyfC (myfC).